We begin with the raw amino-acid sequence, 466 residues long: Cysteine--tRNA ligase (466 aa).

Cys30 contacts Zn(2+). The 'HIGH' region motif lies at 32–42 (PTVYNYIHIGN). Positions 210, 235, and 239 each coordinate Zn(2+). The 'KMSKS' region signature appears at 267 to 271 (KMSKS). Lys270 contacts ATP. Ser271 carries the post-translational modification Phosphoserine.

It belongs to the class-I aminoacyl-tRNA synthetase family. Monomer. It depends on Zn(2+) as a cofactor.

The protein localises to the cytoplasm. It catalyses the reaction tRNA(Cys) + L-cysteine + ATP = L-cysteinyl-tRNA(Cys) + AMP + diphosphate. The sequence is that of Cysteine--tRNA ligase from Geobacillus sp. (strain WCH70).